We begin with the raw amino-acid sequence, 513 residues long: ATP synthase subunit alpha (513 aa).

171–178 serves as a coordination point for ATP; it reads GDRQIGKT.

It belongs to the ATPase alpha/beta chains family. As to quaternary structure, F-type ATPases have 2 components, CF(1) - the catalytic core - and CF(0) - the membrane proton channel. CF(1) has five subunits: alpha(3), beta(3), gamma(1), delta(1), epsilon(1). CF(0) has three main subunits: a(1), b(2) and c(9-12). The alpha and beta chains form an alternating ring which encloses part of the gamma chain. CF(1) is attached to CF(0) by a central stalk formed by the gamma and epsilon chains, while a peripheral stalk is formed by the delta and b chains.

The protein localises to the cell membrane. It catalyses the reaction ATP + H2O + 4 H(+)(in) = ADP + phosphate + 5 H(+)(out). Produces ATP from ADP in the presence of a proton gradient across the membrane. The alpha chain is a regulatory subunit. The chain is ATP synthase subunit alpha from Wolbachia pipientis wMel.